An 864-amino-acid chain; its full sequence is MPDISLKVLSNEIKISIQELIKELSIIGITKTEDNYINVLEKNILLKHLESKKKYSLDTLVLQRKTRSTLRISTVGGKNKSVQVEVRKKRAYVKNNKFENESFLNEKKVIKHSMQKTSSLKNKEKKYIKNIEKIELNKSDSRSLNTKKENKLKISNKDEQNKKFNQHRESNSFDLNHKKRIKENKDIRISHKEEKQDYHLTTFLHARQAEDENDREVEIDKRNHGRILKNYRQKKNNKNFHNGRYNKEEIRTFNRNKKNSKQKNKPILLQQVFQKPESIINRDVIISNTITVSDLANKMAIKSSEVIKNMMNMGIIGTINHVLDQDTAQLIAEEMGHKVIVHRENALEELIMKDRDTGNDVSAIRAPVVTIMGHVDHGKTSLLDYIRSTKTAFYEAGGITQNIGAYHVKTDLGSITFLDTPGHSAFTAMRSRGVQITDIVILVVAADDGVMPQTIEAIQHAKEANVPVIVAINKIDKTDSDIDKVRNDLMKYNILSEEWGGENIFVSVSAKTGKGINKLLNVILLQAEMLELKAVTTGMAEGIVVESFLDKGRGPIATVLVKKGQLKKGDVILCGFEYGRIKSLRDASGNEVFSAGPSIPVEVLGLSKVPFSGDVVTVVRDEKKAREVASYRKEKSREKKLSNQNRINLENMFDDINKNNVSELKIILKSDIQGSLEAISGALLKLSTEEVKIKIIGLGIGGITETDASLALASNAIILGFNVRADTSAKKIINSEHLDLRYYSVIYDLLDEVKAAMTGLLSPEYKENIIGLAEVRNTFKSPKFGLIAGCMVTEGVIKRSNPIHILRNNIVIYEGELESLRRFKEDVNEIRNGLECGIGIKNYNDIRVGDIIEVFEVREMKRIL.

The span at 140–171 (DSRSLNTKKENKLKISNKDEQNKKFNQHRESN) shows a compositional bias: basic and acidic residues. Positions 140–179 (DSRSLNTKKENKLKISNKDEQNKKFNQHRESNSFDLNHKK) are disordered. The region spanning 364-533 (IRAPVVTIMG…LLQAEMLELK (170 aa)) is the tr-type G domain. The tract at residues 373–380 (GHVDHGKT) is G1. Residue 373–380 (GHVDHGKT) participates in GTP binding. Residues 398-402 (GITQN) are G2. The interval 419 to 422 (DTPG) is G3. GTP contacts are provided by residues 419–423 (DTPGH) and 473–476 (NKID). The segment at 473–476 (NKID) is G4. The G5 stretch occupies residues 509 to 511 (SAK).

The protein belongs to the TRAFAC class translation factor GTPase superfamily. Classic translation factor GTPase family. IF-2 subfamily.

It localises to the cytoplasm. One of the essential components for the initiation of protein synthesis. Protects formylmethionyl-tRNA from spontaneous hydrolysis and promotes its binding to the 30S ribosomal subunits. Also involved in the hydrolysis of GTP during the formation of the 70S ribosomal complex. This is Translation initiation factor IF-2 from Buchnera aphidicola subsp. Acyrthosiphon pisum (strain 5A).